The following is a 797-amino-acid chain: Inulosucrase (797 aa).

The signal sequence occupies residues 1 to 36 (MLENKNHKKISLSGKSLLMGTLSTAAIVLSASTANA). Residues 54 to 64 (ASSVNNENNKQ) are compositionally biased toward polar residues. Residues 54-176 (ASSVNNENNK…SVKPAENATK (123 aa)) are disordered. Composition is skewed to basic and acidic residues over residues 65–75 (VTEKDSADKST) and 82–95 (ANTK…ETTE). Over residues 130–139 (DQKTTNAATT) the composition is skewed to low complexity. The span at 140 to 167 (DTKKDDVKQVEKKDSVDKTNAEENKDSS) shows a compositional bias: basic and acidic residues. A substrate-binding site is contributed by W271. Residue D272 is the Nucleophile of the active site. N317 provides a ligand contact to Ca(2+). S340 serves as a coordination point for substrate. D419 lines the Ca(2+) pocket. 424 to 425 (RD) contributes to the substrate binding site. Ca(2+) contacts are provided by Q450, W487, N489, and D521. Substrate is bound by residues 522 to 524 (EIE) and R542. The active-site Proton donor/acceptor is the E524. 3 residues coordinate Ca(2+): D660, I662, and S667. Positions 708-766 (QPVTPIPNVPTTPETPTTPDKPEVPTTPEVPTTPETPTPEAPKNPVKKTSQSKLPKAGD) are disordered. Residues 718–740 (TTPETPTTPDKPEVPTTPEVPTT) are compositionally biased toward low complexity. An LPXTG sorting signal motif is present at residues 761 to 765 (LPKAG). At A764 the chain carries Pentaglycyl murein peptidoglycan amidated alanine. Residues 765-797 (GDKNSFAAVVLGAVSSILGAVGLTGVSKRKRNN) constitute a propeptide, removed by sortase.

The protein belongs to the glycosyl hydrolase 68 family. It depends on Ca(2+) as a cofactor.

It localises to the secreted. The protein localises to the cell wall. The catalysed reaction is [(2-&gt;1)-beta-D-fructosyl](n) + sucrose = [(2-&gt;1)-beta-D-fructosyl](n+1) + D-glucose. In terms of biological role, fructosyltransferase that catalyzes the polymerization of the fructose moiety of sucrose to produce inulin polymer and inulin oligosaccharides such as 1-kestose and nystose. The chain is Inulosucrase from Lactobacillus johnsonii (strain CNCM I-12250 / La1 / NCC 533).